The primary structure comprises 208 residues: Thymidylate kinase (208 aa).

10 to 17 serves as a coordination point for ATP; the sequence is GPEGSGKS.

This sequence belongs to the thymidylate kinase family.

The catalysed reaction is dTMP + ATP = dTDP + ADP. In terms of biological role, phosphorylation of dTMP to form dTDP in both de novo and salvage pathways of dTTP synthesis. In Bacillus cytotoxicus (strain DSM 22905 / CIP 110041 / 391-98 / NVH 391-98), this protein is Thymidylate kinase.